We begin with the raw amino-acid sequence, 488 residues long: Tripartite motif-containing protein 6 (488 aa).

Residues 15–60 (CPICLELLTEPLSIDCGHSFCQVCIIGNSNNSVFGQGGRSSCPVCR) form an RING-type zinc finger. Residues 92-133 (LEVIFCALHGEKLQLFCKEDGKLICWLCERSQEHRGHHTFLM) form a B box-type zinc finger. Positions 97, 100, 119, and 125 each coordinate Zn(2+). Residues 132-223 (LMEEVAQEYQ…SIIEKAEGDL (92 aa)) are a coiled coil. Residues 282 to 488 (DLRKMLKVFR…VPMTLRRPTS (207 aa)) form the B30.2/SPRY domain.

The protein belongs to the TRIM/RBCC family. Homotrimer. Forms heteromultimers (via B30.2/SPRY domain) with TRIM5. Interacts with MYC. Interacts (via SPRY domain) with IKBKE. Interacts with VAMP8; this interaction contributes to the activation of the type I interferon antiviral response. Interacts with DHX16.

It is found in the cytoplasm. It carries out the reaction S-ubiquitinyl-[E2 ubiquitin-conjugating enzyme]-L-cysteine + [acceptor protein]-L-lysine = [E2 ubiquitin-conjugating enzyme]-L-cysteine + N(6)-ubiquitinyl-[acceptor protein]-L-lysine.. Its pathway is protein modification; protein ubiquitination. E3 ubiquitin ligase that plays a crucial role in the activation of the IKBKE-dependent branch of the type I interferon signaling pathway. In concert with the ubiquitin-conjugating E2 enzyme UBE2K, synthesizes unanchored 'Lys-48'-linked polyubiquitin chains that promote the oligomerization and autophosphorylation of IKBKE leading to stimulation of an antiviral response. Also ubiquitinates MYC and inhibits its transcription activation activity, maintaining the pluripotency of embryonic stem cells. Promotes the association of unanchored 'Lys-48'-polyubiquitin chains with DHX16 leading to enhancement of RIGI-mediated innate antiviral immune response. This Mus musculus (Mouse) protein is Tripartite motif-containing protein 6 (Trim6).